Reading from the N-terminus, the 668-residue chain is Probable metal-nicotianamine transporter YSL5 (668 aa).

Over residues 1–11 (MPPPETSSAAA) the composition is skewed to low complexity. Positions 1 to 22 (MPPPETSSAAAPSPPSPDPLPP) are disordered. Pro residues predominate over residues 12 to 22 (PSPPSPDPLPP). The next 14 membrane-spanning stretches (helical) occupy residues 27 to 47 (LTLR…VVIH), 51 to 71 (LTVG…FFLA), 102 to 122 (CAIA…IFAM), 147 to 167 (LGWM…SIVM), 209 to 229 (LVKY…FSGV), 268 to 288 (IVNC…WPFI), 315 to 335 (IAIS…FLII), 383 to 403 (LAVS…PIIF), 410 to 430 (LVLV…YGMG), 443 to 463 (IALF…AGLA), 501 to 521 (IGVA…WTAF), 557 to 577 (LEIC…KDVV), 595 to 615 (FYIG…LFAW), and 633 to 653 (GLIC…ILGV).

It belongs to the YSL (TC 2.A.67.2) family. Expressed in roots.

The protein localises to the membrane. In terms of biological role, may be involved in the transport of nicotianamine-chelated metals. The chain is Probable metal-nicotianamine transporter YSL5 (YSL5) from Oryza sativa subsp. japonica (Rice).